A 307-amino-acid chain; its full sequence is Acetyl-coenzyme A carboxylase carboxyl transferase subunit beta (307 aa).

A disordered region spans residues 1–21 (MAMADQRNDKPGRPAAQRERR). A CoA carboxyltransferase N-terminal domain is found at 43–307 (LWVKCPETGE…MGRERLSPAA (265 aa)).

This sequence belongs to the AccD/PCCB family. Acetyl-CoA carboxylase is a heterohexamer composed of biotin carboxyl carrier protein (AccB), biotin carboxylase (AccC) and two subunits each of ACCase subunit alpha (AccA) and ACCase subunit beta (AccD).

It localises to the cytoplasm. It catalyses the reaction N(6)-carboxybiotinyl-L-lysyl-[protein] + acetyl-CoA = N(6)-biotinyl-L-lysyl-[protein] + malonyl-CoA. It functions in the pathway lipid metabolism; malonyl-CoA biosynthesis; malonyl-CoA from acetyl-CoA: step 1/1. Functionally, component of the acetyl coenzyme A carboxylase (ACC) complex. Biotin carboxylase (BC) catalyzes the carboxylation of biotin on its carrier protein (BCCP) and then the CO(2) group is transferred by the transcarboxylase to acetyl-CoA to form malonyl-CoA. In Phenylobacterium zucineum (strain HLK1), this protein is Acetyl-coenzyme A carboxylase carboxyl transferase subunit beta.